The primary structure comprises 286 residues: tRNA(Ile)-lysidine synthase (286 aa).

7–12 (SGGPDS) is a binding site for ATP.

The protein belongs to the tRNA(Ile)-lysidine synthase family.

It localises to the cytoplasm. The enzyme catalyses cytidine(34) in tRNA(Ile2) + L-lysine + ATP = lysidine(34) in tRNA(Ile2) + AMP + diphosphate + H(+). Functionally, ligates lysine onto the cytidine present at position 34 of the AUA codon-specific tRNA(Ile) that contains the anticodon CAU, in an ATP-dependent manner. Cytidine is converted to lysidine, thus changing the amino acid specificity of the tRNA from methionine to isoleucine. This is tRNA(Ile)-lysidine synthase from Mycoplasmopsis pulmonis (strain UAB CTIP) (Mycoplasma pulmonis).